The chain runs to 137 residues: ATP synthase epsilon chain (137 aa).

It belongs to the ATPase epsilon chain family. In terms of assembly, F-type ATPases have 2 components, CF(1) - the catalytic core - and CF(0) - the membrane proton channel. CF(1) has five subunits: alpha(3), beta(3), gamma(1), delta(1), epsilon(1). CF(0) has three main subunits: a, b and c.

The protein localises to the cell membrane. Functionally, produces ATP from ADP in the presence of a proton gradient across the membrane. In Mycoplasmopsis synoviae (strain 53) (Mycoplasma synoviae), this protein is ATP synthase epsilon chain.